A 315-amino-acid polypeptide reads, in one-letter code: Ribonuclease Z (315 aa).

Residues His61, His63, Asp65, His66, His151, Asp219, and His278 each coordinate Zn(2+). The active-site Proton acceptor is the Asp65.

This sequence belongs to the RNase Z family. Homodimer. It depends on Zn(2+) as a cofactor.

The enzyme catalyses Endonucleolytic cleavage of RNA, removing extra 3' nucleotides from tRNA precursor, generating 3' termini of tRNAs. A 3'-hydroxy group is left at the tRNA terminus and a 5'-phosphoryl group is left at the trailer molecule.. Zinc phosphodiesterase, which displays some tRNA 3'-processing endonuclease activity. Probably involved in tRNA maturation, by removing a 3'-trailer from precursor tRNA. The sequence is that of Ribonuclease Z from Clostridium botulinum (strain Eklund 17B / Type B).